The sequence spans 1715 residues: Sodium channel protein type 4 subunit alpha B (1715 aa).

At 1–126 (MGTLLPPVGS…IFAIKILVHS (126 aa)) the chain is on the cytoplasmic side. An I repeat occupies 108–431 (LLSPFNSMRI…VVAMAYAEQN (324 aa)). Residues 127 to 145 (LFSLFIMATILTNCVFMTL) form a helical membrane-spanning segment. The Extracellular segment spans residues 146 to 152 (SDPPAWS). The chain crosses the membrane as a helical span at residues 153 to 173 (KTVEYVFTFIYTFEATIKVVS). The Cytoplasmic segment spans residues 174–187 (RGFCVGQFTFLKDP). Residues 188-205 (WNWLDFMVISMAYLTELV) form a helical membrane-spanning segment. At 206–211 (DLGNVS) the chain is on the extracellular side. Residue Asn-209 is glycosylated (N-linked (GlcNAc...) asparagine). A helical transmembrane segment spans residues 212-228 (VLRTFRVLRALKTITVI). At 229–247 (PGLKTIVGALIQSVKKLAD) the chain is on the cytoplasmic side. A helical membrane pass occupies residues 248-267 (AMVLTVFCLSVFALIGLQLF). The Extracellular segment spans residues 268–368 (MGNLRQKCVL…PNYGYTSYDS (101 aa)). An intrachain disulfide couples Cys-275 to Cys-337. N-linked (GlcNAc...) asparagine glycans are attached at residues Asn-284, Asn-304, and Asn-339. Cys-346 and Cys-352 are disulfide-bonded. The segment at residues 369-393 (FGWAFLALFRLMTQDFWENLFQLTL) is an intramembrane region (pore-forming). Topologically, residues 394–400 (RAAGKTY) are extracellular. Residues 401-421 (MIFFVVVIFLGSFYLINLILA) traverse the membrane as a helical segment. The Cytoplasmic segment spans residues 422-515 (VVAMAYAEQN…RCLSAIVMDP (94 aa)). An II repeat occupies 497 to 768 (CCSCWRHLKR…QIAVNRIKRA (272 aa)). The helical transmembrane segment at 516–534 (FVDLGITICIILNTIFMAM) threads the bilayer. Over 535-545 (EHYPMSADFEE) the chain is Extracellular. Residues 546 to 565 (LLSVGNLVFTGIFTCEMVLK) traverse the membrane as a helical segment. Residues 566 to 579 (ILAMDPYFYFQVGW) are Cytoplasmic-facing. A helical membrane pass occupies residues 580–599 (NIFDSIIVTMSLVELGLANV). Over 600-601 (QG) the chain is Extracellular. The helical transmembrane segment at 602 to 619 (LSVLRSFRLMRVFKLAKS) threads the bilayer. Residues 620–635 (WPTLNMLIKIIGNSVG) are Cytoplasmic-facing. Residues 636–654 (ALGNLTLVLAIIVFIFAVV) traverse the membrane as a helical segment. Residues 655–683 (GMQLFGKNYKDCVCRISEDCKLPRWHMND) are Extracellular-facing. An intrachain disulfide couples Cys-668 to Cys-674. The segment at residues 684 to 704 (FFHAFLIIFRVLCGEWIDTMW) is an intramembrane region (pore-forming). Residues 705–715 (DCMEVSGQTMC) lie on the Extracellular side of the membrane. The cysteines at positions 706 and 715 are disulfide-linked. A helical membrane pass occupies residues 716 to 734 (LIVYMMVLVIGNLVVLNLF). The Cytoplasmic segment spans residues 735 to 915 (LALLLSSFSG…ACFIIVENNY (181 aa)). A disordered region spans residues 824-865 (EAESDSEDSDDDDVDEDKHSRCDESSFCSTVQDPEVKENEAD). A compositionally biased stretch (acidic residues) spans 825 to 838 (AESDSEDSDDDDVD). Residues 896 to 1211 (KGKVWCNIRR…KKYYNAMKKL (316 aa)) form an III repeat. The helical transmembrane segment at 916–933 (FESFIVFMILLSSGALAF) threads the bilayer. The Extracellular portion of the chain corresponds to 934–946 (EDIYLEKHQLIKT). A helical membrane pass occupies residues 947–965 (ILEYADKVFTYVFVVEMVL). The Cytoplasmic segment spans residues 966–979 (KWFAYGFKSYFSNA). The chain crosses the membrane as a helical span at residues 980–998 (WCWLDFLIVDVSLVSLTAN). Topologically, residues 999–1006 (ILGYSELG) are extracellular. The helical transmembrane segment at 1007–1025 (AIKSLRTLRALRPLRALSR) threads the bilayer. At 1026–1042 (FEGMRVVVNALVGAVPS) the chain is on the cytoplasmic side. Residues 1043-1062 (IFNVLLVCLIFWLIFSIMGV) traverse the membrane as a helical segment. The Extracellular portion of the chain corresponds to 1063–1115 (NLFAGKFSYCFNETSQEQFDKKIVNNKTECIALIEANFTEVRWKNLKVNYDNV). An intrachain disulfide couples Cys-1072 to Cys-1092. 2 N-linked (GlcNAc...) asparagine glycosylation sites follow: Asn-1074 and Asn-1088. The pore-forming intramembrane region spans 1116 to 1137 (GIGYLSLLQVATFKGWMEIMYA). Residues 1138-1154 (AVDSRDVESQPIYEVNI) lie on the Extracellular side of the membrane. The helical transmembrane segment at 1155–1176 (YMYLYFVIFIIFGSFFTLNLFI) threads the bilayer. Residues 1177–1239 (GVIIDNFNQQ…LVFDLVTKQI (63 aa)) lie on the Cytoplasmic side of the membrane. Residues 1195–1197 (IFM) form an important for rapid channel inactivation region. The stretch at 1220–1517 (VPRPENALQG…WEKFDPDATQ (298 aa)) is one IV repeat. A helical transmembrane segment spans residues 1240–1257 (FDVFIMVLICLNMVTMMV). At 1258-1268 (ETDEQTKEKED) the chain is on the extracellular side. A helical membrane pass occupies residues 1269 to 1287 (ILYWINVIFIVIFTTECIL). The Cytoplasmic portion of the chain corresponds to 1288 to 1299 (KTIALRRHYFSI). The chain crosses the membrane as a helical span at residues 1300–1317 (GWNVFDFVVVILSILGLL). The Extracellular segment spans residues 1318-1330 (LADIIEKYFVSPT). The helical transmembrane segment at 1331–1347 (LFRVIRLARIGRVLRLI) threads the bilayer. Over 1348–1366 (RGAKGIRTLLFALMMSLPA) the chain is Cytoplasmic. Residues 1367-1384 (LFNIGLLLFLIMFIFSIF) traverse the membrane as a helical segment. Topologically, residues 1385-1406 (GMSNFAYVKKEAMIDDMFNFET) are extracellular. The segment at residues 1407 to 1429 (FGNSMICLFMITTSAGWDGLLSP) is an intramembrane region (pore-forming). Residues 1430 to 1458 (IMNKPPDCDPDLENPGTTVRGNCGSPAIG) are Extracellular-facing. Residues Cys-1437 and Cys-1452 are joined by a disulfide bond. The helical transmembrane segment at 1459–1481 (IVFFSTYIIMSFLVVVNMYIAII) threads the bilayer. Topologically, residues 1482 to 1715 (LENFNVATEE…LGTSERESLV (234 aa)) are cytoplasmic. One can recognise an IQ domain in the interval 1611-1640 (EEVAARVIQRAYRKYLLQRTVRLASFTYRE).

The protein belongs to the sodium channel (TC 1.A.1.10) family. Nav1.4/SCN4A subfamily. In terms of assembly, voltage-gated sodium (Nav) channels consist of an ion-conducting alpha subunit which is functional on its own associated with regulatory beta subunits.

The protein resides in the cell membrane. The enzyme catalyses Na(+)(in) = Na(+)(out). In terms of biological role, pore-forming subunit of a voltage-gated sodium (Nav) channel that directly mediates the depolarizing phase of action potentials in excitable membranes. Navs, also called VGSCs (voltage-gated sodium channels) or VDSCs (voltage-dependent sodium channels), operate by switching between closed and open conformations depending on the voltage difference across the membrane. In the open conformation they allow Na(+) ions to selectively pass through the pore, along their electrochemical gradient. The influx of Na+ ions provokes membrane depolarization, initiating the propagation of electrical signals throughout cells and tissues. This is Sodium channel protein type 4 subunit alpha B (scn4ab) from Tetraodon nigroviridis (Spotted green pufferfish).